The sequence spans 372 residues: SAM domain-containing protein SAMSN-1 (372 aa).

The segment at 1–71 (MLKRKPSNAS…SGGSLGKKVR (71 aa)) is disordered. Residues 20-25 (RSSSFG) carry the Important for interaction with 14-3-3 proteins motif. Residues Ser23 and Ser34 each carry the phosphoserine modification. Over residues 37–49 (KSDDSIEVHDREL) the composition is skewed to basic and acidic residues. Over residues 52–63 (GSEEQSKTSSSG) the composition is skewed to low complexity. Ser74 is modified (phosphoserine). A Phosphothreonine modification is found at Thr76. Phosphoserine occurs at positions 90, 97, and 119. The interval 90–111 (SEEKEEESGEEALPYRNSDPMI) is disordered. Over residues 129-146 (LYSGQSSSSGITSCSDGT) the composition is skewed to low complexity. The tract at residues 129 to 153 (LYSGQSSSSGITSCSDGTSNRDSFR) is disordered. The residue at position 160 (Tyr160) is a Phosphotyrosine. An SH3 domain is found at 163-224 (PFCGRAKVHT…KFIYVDVILE (62 aa)). Positions 241 to 305 (ENHQTIQEFL…LSAAESLLDE (65 aa)) constitute an SAM domain. The disordered stretch occupies residues 304 to 372 (DEETTVEHEK…QKIAITESSD (69 aa)). Positions 317–329 (PLSSNPDILSASQ) are enriched in polar residues.

As to quaternary structure, interacts with FASLG. Interacts with phosphotyrosine containing proteins. Interacts (via SH3 domain) with CTTN. Interacts (phosphorylated at Ser-23) with YWHAB, YWHAE, YWHAG, YWHAH, YWHAZ and SFN. Interacts directly with SAP30 and HDAC1. Identified in a complex with SAP30 and HDAC1. As to expression, detected in spleen and lymph node (at protein level).

Its subcellular location is the nucleus. It is found in the cytoplasm. The protein localises to the cell projection. The protein resides in the ruffle. Its function is as follows. Negative regulator of B-cell activation. Down-regulates cell proliferation (in vitro). Promotes RAC1-dependent membrane ruffle formation and reorganization of the actin cytoskeleton. Regulates cell spreading and cell polarization. Stimulates HDAC1 activity. Regulates LYN activity by modulating its tyrosine phosphorylation. The polypeptide is SAM domain-containing protein SAMSN-1 (Samsn1) (Mus musculus (Mouse)).